A 311-amino-acid chain; its full sequence is Taste receptor type 2 member 9 (311 aa).

Residues 1-9 lie on the Extracellular side of the membrane; the sequence is MPSTIEAIY. Residues 10-32 traverse the membrane as a helical segment; that stretch reads IILIAGELTIGIWGNGFIVLVNC. Over 33 to 52 the chain is Cytoplasmic; that stretch reads IDWLKRRDVSLIDIILISLA. Residues 53-72 form a helical membrane-spanning segment; that stretch reads ISRICLLCVISLDGFFILLF. Residues 73 to 86 are Extracellular-facing; it reads PGTYDTNVLESIMD. The chain crosses the membrane as a helical span at residues 87 to 109; it reads AVWTFANNSSLWFTSCLSIFYLL. Over 110-128 the chain is Cytoplasmic; that stretch reads KIANISHPFFFWLKLKINK. Residues 129 to 146 traverse the membrane as a helical segment; sequence VILAILLGSFLISLIISF. Over 147–179 the chain is Extracellular; it reads PINGMWYNLFKVSHEENITWAFKVSTIPGAFKQ. N-linked (GlcNAc...) asparagine glycosylation occurs at asparagine 163. A helical transmembrane segment spans residues 180-202; sequence LTLNLGAMVPFILCLISFFLLLF. Residues 203–233 lie on the Cytoplasmic side of the membrane; it reads SLVRHTKQIQLHATGFRDPSTEAHMRAVKAV. A helical transmembrane segment spans residues 234-256; the sequence is IIFLLLLILYYPVFLVMTSSTLI. At 257–260 the chain is on the extracellular side; the sequence is PQGK. A helical membrane pass occupies residues 261–283; that stretch reads LVLMIGDIVTVIFPSSHSFILIM. Over 284–311 the chain is Cytoplasmic; that stretch reads GNSKLRAAFLKMLRFVKGFLRRRKPFVP.

It belongs to the G-protein coupled receptor T2R family.

It is found in the membrane. In terms of biological role, gustducin-coupled receptor implicated in the perception of bitter compounds in the oral cavity and the gastrointestinal tract. Signals through PLCB2 and the calcium-regulated cation channel TRPM5. In Macaca mulatta (Rhesus macaque), this protein is Taste receptor type 2 member 9 (TAS2R9).